We begin with the raw amino-acid sequence, 210 residues long: Transcriptional regulator DauR (210 aa).

The protein belongs to the DauR family.

In terms of biological role, dauR represses the dauBAR operon. This Pseudomonas aeruginosa (strain ATCC 15692 / DSM 22644 / CIP 104116 / JCM 14847 / LMG 12228 / 1C / PRS 101 / PAO1) protein is Transcriptional regulator DauR.